Reading from the N-terminus, the 121-residue chain is Large ribosomal subunit protein uL18 (121 aa).

The protein belongs to the universal ribosomal protein uL18 family. As to quaternary structure, part of the 50S ribosomal subunit; part of the 5S rRNA/L5/L18/L25 subcomplex. Contacts the 5S and 23S rRNAs.

Its function is as follows. This is one of the proteins that bind and probably mediate the attachment of the 5S RNA into the large ribosomal subunit, where it forms part of the central protuberance. This is Large ribosomal subunit protein uL18 from Bordetella avium (strain 197N).